The chain runs to 158 residues: Low molecular weight phosphotyrosine protein phosphatase (158 aa).

N-acetylalanine is present on alanine 2. The Nucleophile role is filled by cysteine 13. The active site involves arginine 19. The active-site Proton donor is aspartate 130. Tyrosine 132 and tyrosine 133 each carry phosphotyrosine.

Belongs to the low molecular weight phosphotyrosine protein phosphatase family. Interacts with EPHA2; dephosphorylates EPHA2. Interacts with EPHB1. In terms of assembly, interacts with the SH3 domain of SPTAN1. There is no interaction observed for isoform 2. In terms of processing, phosphorylated by LCK. Phosphorylation at Tyr-132 increases its phosphatase activity. As to expression, widely expressed with highest levels in brain and liver and lowest levels in muscle.

It is found in the cytoplasm. It catalyses the reaction O-phospho-L-tyrosyl-[protein] + H2O = L-tyrosyl-[protein] + phosphate. The enzyme catalyses a phosphate monoester + H2O = an alcohol + phosphate. With respect to regulation, inhibited by sulfhydryl reagents. Functionally, acts on tyrosine phosphorylated proteins, low-MW aryl phosphates and natural and synthetic acyl phosphates with differences in substrate specificity between isoform 1 and isoform 2. The chain is Low molecular weight phosphotyrosine protein phosphatase from Mus musculus (Mouse).